The following is a 293-amino-acid chain: ATP synthase gamma chain (293 aa).

Belongs to the ATPase gamma chain family. As to quaternary structure, F-type ATPases have 2 components, CF(1) - the catalytic core - and CF(0) - the membrane proton channel. CF(1) has five subunits: alpha(3), beta(3), gamma(1), delta(1), epsilon(1). CF(0) has three main subunits: a, b and c.

The protein resides in the cell membrane. In terms of biological role, produces ATP from ADP in the presence of a proton gradient across the membrane. The gamma chain is believed to be important in regulating ATPase activity and the flow of protons through the CF(0) complex. The polypeptide is ATP synthase gamma chain (Streptococcus agalactiae serotype III (strain NEM316)).